Reading from the N-terminus, the 604-residue chain is Glutamyl-tRNA(Gln) amidotransferase subunit B, mitochondrial (604 aa).

Residues 1–48 (MIRQCLSRRGAYSRYRLAARGVELAEPFHHQSSRPQGRRNWSSSPRCS) constitute a mitochondrion transit peptide. The interval 28 to 57 (FHHQSSRPQGRRNWSSSPRCSLDIRTDTPR) is disordered. The span at 33–46 (SRPQGRRNWSSSPR) shows a compositional bias: polar residues.

The protein belongs to the GatB/GatE family. GatB subfamily. As to quaternary structure, subunit of the heterotrimeric GatCAB amidotransferase (AdT) complex, composed of A, B and C subunits.

The protein localises to the mitochondrion. The enzyme catalyses L-glutamyl-tRNA(Gln) + L-glutamine + ATP + H2O = L-glutaminyl-tRNA(Gln) + L-glutamate + ADP + phosphate + H(+). Allows the formation of correctly charged Gln-tRNA(Gln) through the transamidation of misacylated Glu-tRNA(Gln) in the mitochondria. The reaction takes place in the presence of glutamine and ATP through an activated gamma-phospho-Glu-tRNA(Gln). The sequence is that of Glutamyl-tRNA(Gln) amidotransferase subunit B, mitochondrial from Ajellomyces dermatitidis (strain ER-3 / ATCC MYA-2586) (Blastomyces dermatitidis).